We begin with the raw amino-acid sequence, 394 residues long: Na(+)/H(+) antiporter NhaA (394 aa).

11 helical membrane-spanning segments follow: residues 11 to 31, 59 to 79, 95 to 115, 125 to 145, 155 to 175, 177 to 197, 203 to 220, 254 to 274, 296 to 316, 328 to 348, and 365 to 385; these read LEAA…IFAN, LLMW…GMEV, IFPA…YWFI, GWAI…ALLS, FLLA…ALFF, HEMS…LVAM, TGLI…ASVL, ALAP…NAGV, LIIG…LLGI, IFAI…IAGL, and LGIL…LKIT.

This sequence belongs to the NhaA Na(+)/H(+) (TC 2.A.33) antiporter family.

It localises to the cell inner membrane. It carries out the reaction Na(+)(in) + 2 H(+)(out) = Na(+)(out) + 2 H(+)(in). Functionally, na(+)/H(+) antiporter that extrudes sodium in exchange for external protons. This is Na(+)/H(+) antiporter NhaA from Actinobacillus pleuropneumoniae serotype 3 (strain JL03).